Here is a 90-residue protein sequence, read N- to C-terminus: Phenol 2-monooxygenase, stimulatory component DmpM (90 aa).

Belongs to the TmoD/XamoD family. In terms of assembly, active as a monomer. Formation of dimers inactivates the protein. The multicomponent enzyme phenol hydroxylase is formed by DmpL (P1 component), DmpM (P2 component), DmpN (P3 component), DmpO (P4 component) and DmpP (P5 component).

The enzyme catalyses phenol + NADH + O2 + H(+) = catechol + NAD(+) + H2O. It participates in aromatic compound metabolism; phenol degradation. Part of a multicomponent enzyme which catalyzes the degradation of phenol and some of its methylated derivatives. DmpM is a regulatory subunit that stimulates the phenol hydroxylase activity of the complex. The steady-state rate of phenol hydroxylase turnover is dependent on the DmpM concentration, with a maximum observed rate at about 1.5 DmpM per oxygenase monomer. Higher concentrations of DmpM inhibit phenol hydroxylase activity. May act by altering the redox potential of the oxygenase. Required for growth on phenol and for in vitro phenol hydroxylase activity. The polypeptide is Phenol 2-monooxygenase, stimulatory component DmpM (Pseudomonas sp. (strain CF600)).